Reading from the N-terminus, the 245-residue chain is 1-(5-phosphoribosyl)-5-[(5-phosphoribosylamino)methylideneamino] imidazole-4-carboxamide isomerase (245 aa).

The Proton acceptor role is filled by aspartate 7. Aspartate 129 functions as the Proton donor in the catalytic mechanism.

The protein belongs to the HisA/HisF family.

Its subcellular location is the cytoplasm. It carries out the reaction 1-(5-phospho-beta-D-ribosyl)-5-[(5-phospho-beta-D-ribosylamino)methylideneamino]imidazole-4-carboxamide = 5-[(5-phospho-1-deoxy-D-ribulos-1-ylimino)methylamino]-1-(5-phospho-beta-D-ribosyl)imidazole-4-carboxamide. It functions in the pathway amino-acid biosynthesis; L-histidine biosynthesis; L-histidine from 5-phospho-alpha-D-ribose 1-diphosphate: step 4/9. This chain is 1-(5-phosphoribosyl)-5-[(5-phosphoribosylamino)methylideneamino] imidazole-4-carboxamide isomerase, found in Shewanella sp. (strain ANA-3).